Reading from the N-terminus, the 377-residue chain is Chaperone protein DnaJ (377 aa).

The J domain occupies 4–69 (DYYEALGVTR…QKRAAYDRFG (66 aa)). Residues 135 to 213 (GKTAQIRVPT…CHGQGRVTQE (79 aa)) form a CR-type zinc finger. Zn(2+) is bound by residues cysteine 148, cysteine 151, cysteine 165, cysteine 168, cysteine 187, cysteine 190, cysteine 201, and cysteine 204. CXXCXGXG motif repeat units lie at residues 148–155 (CDECSGSG), 165–172 (CTMCSGSG), 187–194 (CPGCNGRG), and 201–208 (CEKCHGQG).

The protein belongs to the DnaJ family. In terms of assembly, homodimer. Requires Zn(2+) as cofactor.

It localises to the cytoplasm. Functionally, participates actively in the response to hyperosmotic and heat shock by preventing the aggregation of stress-denatured proteins and by disaggregating proteins, also in an autonomous, DnaK-independent fashion. Unfolded proteins bind initially to DnaJ; upon interaction with the DnaJ-bound protein, DnaK hydrolyzes its bound ATP, resulting in the formation of a stable complex. GrpE releases ADP from DnaK; ATP binding to DnaK triggers the release of the substrate protein, thus completing the reaction cycle. Several rounds of ATP-dependent interactions between DnaJ, DnaK and GrpE are required for fully efficient folding. Also involved, together with DnaK and GrpE, in the DNA replication of plasmids through activation of initiation proteins. The protein is Chaperone protein DnaJ of Brucella abortus (strain S19).